The sequence spans 749 residues: Catalase-peroxidase (749 aa).

Positions 98-234 form a cross-link, tryptophyl-tyrosyl-methioninium (Trp-Tyr) (with M-260); that stretch reads WHAAGTYRVQ…LAASHMGLIY (137 aa). Residue His-99 is the Proton acceptor of the active site. The tryptophyl-tyrosyl-methioninium (Tyr-Met) (with W-98) cross-link spans 234–260; that stretch reads YVNPEGPNGEPDPVAAAHDIRTTFGRM. His-275 serves as a coordination point for heme b.

The protein belongs to the peroxidase family. Peroxidase/catalase subfamily. In terms of assembly, homodimer or homotetramer. The cofactor is heme b. Formation of the three residue Trp-Tyr-Met cross-link is important for the catalase, but not the peroxidase activity of the enzyme.

The protein resides in the cytoplasm. It carries out the reaction H2O2 + AH2 = A + 2 H2O. The catalysed reaction is 2 H2O2 = O2 + 2 H2O. Its function is as follows. Bifunctional enzyme with both catalase and broad-spectrum peroxidase activity. The sequence is that of Catalase-peroxidase from Mycosarcoma maydis (Corn smut fungus).